The chain runs to 456 residues: UDP-N-acetylmuramoylalanine--D-glutamate ligase (456 aa).

119–125 (GSNGKTT) lines the ATP pocket.

This sequence belongs to the MurCDEF family.

The protein resides in the cytoplasm. It carries out the reaction UDP-N-acetyl-alpha-D-muramoyl-L-alanine + D-glutamate + ATP = UDP-N-acetyl-alpha-D-muramoyl-L-alanyl-D-glutamate + ADP + phosphate + H(+). Its pathway is cell wall biogenesis; peptidoglycan biosynthesis. Its function is as follows. Cell wall formation. Catalyzes the addition of glutamate to the nucleotide precursor UDP-N-acetylmuramoyl-L-alanine (UMA). The chain is UDP-N-acetylmuramoylalanine--D-glutamate ligase from Limosilactobacillus reuteri (strain DSM 20016) (Lactobacillus reuteri).